Here is a 102-residue protein sequence, read N- to C-terminus: NADH-quinone oxidoreductase subunit K (102 aa).

A run of 3 helical transmembrane segments spans residues 5-25 (LGHYLAVAAMLFTLGILGIFL), 30-50 (IIVILMSVELILLAVNINLVA), and 62-82 (VFALLVLTVAAAEAAIGLAVL).

The protein belongs to the complex I subunit 4L family. As to quaternary structure, NDH-1 is composed of 14 different subunits. Subunits NuoA, H, J, K, L, M, N constitute the membrane sector of the complex.

The protein localises to the cell inner membrane. It catalyses the reaction a quinone + NADH + 5 H(+)(in) = a quinol + NAD(+) + 4 H(+)(out). NDH-1 shuttles electrons from NADH, via FMN and iron-sulfur (Fe-S) centers, to quinones in the respiratory chain. The immediate electron acceptor for the enzyme in this species is believed to be ubiquinone. Couples the redox reaction to proton translocation (for every two electrons transferred, four hydrogen ions are translocated across the cytoplasmic membrane), and thus conserves the redox energy in a proton gradient. In Bradyrhizobium sp. (strain BTAi1 / ATCC BAA-1182), this protein is NADH-quinone oxidoreductase subunit K.